Reading from the N-terminus, the 44-residue chain is Cytochrome b559 subunit beta (44 aa).

A helical membrane pass occupies residues 19-35; it reads WLAVHTLAVPTVFFIGA. Residue His23 coordinates heme.

This sequence belongs to the PsbE/PsbF family. As to quaternary structure, heterodimer of an alpha subunit and a beta subunit. PSII is composed of 1 copy each of membrane proteins PsbA, PsbB, PsbC, PsbD, PsbE, PsbF, PsbH, PsbI, PsbJ, PsbK, PsbL, PsbM, PsbT, PsbX, PsbY, PsbZ, Psb30/Ycf12, peripheral proteins PsbO, CyanoQ (PsbQ), PsbU, PsbV and a large number of cofactors. It forms dimeric complexes. The cofactor is heme b.

The protein resides in the cellular thylakoid membrane. In terms of biological role, this b-type cytochrome is tightly associated with the reaction center of photosystem II (PSII). PSII is a light-driven water:plastoquinone oxidoreductase that uses light energy to abstract electrons from H(2)O, generating O(2) and a proton gradient subsequently used for ATP formation. It consists of a core antenna complex that captures photons, and an electron transfer chain that converts photonic excitation into a charge separation. The protein is Cytochrome b559 subunit beta of Gloeothece citriformis (strain PCC 7424) (Cyanothece sp. (strain PCC 7424)).